A 304-amino-acid chain; its full sequence is Glycine--tRNA ligase alpha subunit (304 aa).

The protein belongs to the class-II aminoacyl-tRNA synthetase family. As to quaternary structure, tetramer of two alpha and two beta subunits.

It is found in the cytoplasm. It catalyses the reaction tRNA(Gly) + glycine + ATP = glycyl-tRNA(Gly) + AMP + diphosphate. The sequence is that of Glycine--tRNA ligase alpha subunit from Yersinia pseudotuberculosis serotype O:1b (strain IP 31758).